Reading from the N-terminus, the 81-residue chain is Mipartoxin-2 (81 aa).

Positions 1–21 (MKTLLLTLVVVTIVCLDLGNS) are cleaved as a signal peptide. 4 disulfides stabilise this stretch: C24–C42, C35–C61, C65–C73, and C74–C79.

The protein belongs to the three-finger toxin family. Short-chain subfamily. In terms of tissue distribution, expressed by the venom gland.

It is found in the secreted. In terms of biological role, snake venom neurotoxin that blocks neuromuscular transmission, presenting a postsynaptic action through the nicotinic acetylcholine receptor (nAChR). Has no cytotoxic activity. The polypeptide is Mipartoxin-2 (Micrurus mipartitus (Red-tailed coral snake)).